A 255-amino-acid chain; its full sequence is Pimeloyl-[acyl-carrier protein] methyl ester esterase (255 aa).

One can recognise an AB hydrolase-1 domain in the interval Leu-16–Pro-242. Substrate-binding positions include Trp-22, Ser-82 to Leu-83, and Phe-143 to Gln-147. Ser-82 acts as the Nucleophile in catalysis. Active-site residues include Asp-207 and His-235. Substrate is bound at residue His-235.

Belongs to the AB hydrolase superfamily. Carboxylesterase BioH family. In terms of assembly, monomer.

It localises to the cytoplasm. It carries out the reaction 6-carboxyhexanoyl-[ACP] methyl ester + H2O = 6-carboxyhexanoyl-[ACP] + methanol + H(+). It functions in the pathway cofactor biosynthesis; biotin biosynthesis. In terms of biological role, the physiological role of BioH is to remove the methyl group introduced by BioC when the pimeloyl moiety is complete. It allows to synthesize pimeloyl-ACP via the fatty acid synthetic pathway through the hydrolysis of the ester bonds of pimeloyl-ACP esters. The polypeptide is Pimeloyl-[acyl-carrier protein] methyl ester esterase (Pectobacterium carotovorum subsp. carotovorum (strain PC1)).